Consider the following 500-residue polypeptide: MTGYILAIDQGTTSSRAVIFDGAMKIVAVGQKEFPQHYPASGWVEHDPEDIWKSVVATVKTALRKAKLEASRITAIGITNQRETAVIWDRATGMPIHNAIVWQDRRTAPLCAKLKKAGLEPKFTRKTGLLLDPYFSGTKFAWLLDNVKGARRRAEKGELLAGTIDTYLIWRLTGGRMHATDATNASRTLLYNISKNAWDADLLKILRIPTALLPEVKDCAAEFGVTEKKIFGAEIPILGVAGDQQAATIGQACFEPGMLKSTYGTGCFAVLNTGERLIRSKNRLLSTIAYRLDGKTTYALEGSIFIAGAAVQWLRDGIKVIGKAAESGALAERSDETQQIYLVPAFVGLGAPHWDADARGAIFGLTRNSGPAEFARAALESVAYQTHDLLVAMKRDCGNTFGKTVLRVDGGMVASSWTMQCLADILDAPVDSPTITETTALGAAWLAGSKAGIWPDRATFAKSWALERRFEPQMDGRQRKAKLAGWADAVSRTLTARAPC.

Thr12 contributes to the ADP binding site. Residues Thr12, Thr13, and Ser14 each coordinate ATP. Thr12 provides a ligand contact to sn-glycerol 3-phosphate. Residue Arg16 coordinates ADP. Sn-glycerol 3-phosphate contacts are provided by Arg82, Glu83, Tyr134, and Asp243. Arg82, Glu83, Tyr134, Asp243, and Gln244 together coordinate glycerol. Residues Thr265 and Gly308 each contribute to the ADP site. Residues Thr265, Gly308, Gln312, and Gly411 each contribute to the ATP site. Gly411 is an ADP binding site.

This sequence belongs to the FGGY kinase family.

The catalysed reaction is glycerol + ATP = sn-glycerol 3-phosphate + ADP + H(+). It functions in the pathway polyol metabolism; glycerol degradation via glycerol kinase pathway; sn-glycerol 3-phosphate from glycerol: step 1/1. With respect to regulation, inhibited by fructose 1,6-bisphosphate (FBP). Functionally, key enzyme in the regulation of glycerol uptake and metabolism. Catalyzes the phosphorylation of glycerol to yield sn-glycerol 3-phosphate. In Chelativorans sp. (strain BNC1), this protein is Glycerol kinase.